The sequence spans 58 residues: Small ribosomal subunit protein bS21 (58 aa).

Residues 36 to 58 (EHYEKPSVKRKKKSEAARRRKYR) are disordered. A compositionally biased stretch (basic residues) spans 43–58 (VKRKKKSEAARRRKYR).

Belongs to the bacterial ribosomal protein bS21 family.

The polypeptide is Small ribosomal subunit protein bS21 (Symbiobacterium thermophilum (strain DSM 24528 / JCM 14929 / IAM 14863 / T)).